We begin with the raw amino-acid sequence, 464 residues long: Asparagine--tRNA ligase (464 aa).

Belongs to the class-II aminoacyl-tRNA synthetase family. Homodimer.

The protein localises to the cytoplasm. It catalyses the reaction tRNA(Asn) + L-asparagine + ATP = L-asparaginyl-tRNA(Asn) + AMP + diphosphate + H(+). In Xanthomonas campestris pv. campestris (strain 8004), this protein is Asparagine--tRNA ligase.